The primary structure comprises 369 residues: tRNA 2-selenouridine synthase (369 aa).

The region spanning 12 to 136 (FLDDIPLMDV…LRNFLFETTR (125 aa)) is the Rhodanese domain. The active-site S-selanylcysteine intermediate is the Cys-95.

The protein belongs to the SelU family. In terms of assembly, monomer.

The catalysed reaction is 5-methylaminomethyl-2-thiouridine(34) in tRNA + selenophosphate + (2E)-geranyl diphosphate + H2O + H(+) = 5-methylaminomethyl-2-selenouridine(34) in tRNA + (2E)-thiogeraniol + phosphate + diphosphate. It catalyses the reaction 5-methylaminomethyl-2-thiouridine(34) in tRNA + (2E)-geranyl diphosphate = 5-methylaminomethyl-S-(2E)-geranyl-thiouridine(34) in tRNA + diphosphate. The enzyme catalyses 5-methylaminomethyl-S-(2E)-geranyl-thiouridine(34) in tRNA + selenophosphate + H(+) = 5-methylaminomethyl-2-(Se-phospho)selenouridine(34) in tRNA + (2E)-thiogeraniol. It carries out the reaction 5-methylaminomethyl-2-(Se-phospho)selenouridine(34) in tRNA + H2O = 5-methylaminomethyl-2-selenouridine(34) in tRNA + phosphate. Its function is as follows. Involved in the post-transcriptional modification of the uridine at the wobble position (U34) of tRNA(Lys), tRNA(Glu) and tRNA(Gln). Catalyzes the conversion of 2-thiouridine (S2U-RNA) to 2-selenouridine (Se2U-RNA). Acts in a two-step process involving geranylation of 2-thiouridine (S2U) to S-geranyl-2-thiouridine (geS2U) and subsequent selenation of the latter derivative to 2-selenouridine (Se2U) in the tRNA chain. The protein is tRNA 2-selenouridine synthase of Pseudomonas aeruginosa (strain LESB58).